Consider the following 254-residue polypeptide: Sugar fermentation stimulation protein homolog (254 aa).

This sequence belongs to the SfsA family.

In Synechococcus sp. (strain CC9605), this protein is Sugar fermentation stimulation protein homolog.